The following is a 250-amino-acid chain: 5-oxoprolinase subunit A (250 aa).

It belongs to the LamB/PxpA family. In terms of assembly, forms a complex composed of PxpA, PxpB and PxpC.

It catalyses the reaction 5-oxo-L-proline + ATP + 2 H2O = L-glutamate + ADP + phosphate + H(+). Functionally, catalyzes the cleavage of 5-oxoproline to form L-glutamate coupled to the hydrolysis of ATP to ADP and inorganic phosphate. This Paraburkholderia phymatum (strain DSM 17167 / CIP 108236 / LMG 21445 / STM815) (Burkholderia phymatum) protein is 5-oxoprolinase subunit A.